The following is a 412-amino-acid chain: Probable tRNA pseudouridine synthase D (412 aa).

Asp-97 acts as the Nucleophile in catalysis. A TRUD domain is found at Ala-167 to Gln-370.

It belongs to the pseudouridine synthase TruD family.

The enzyme catalyses uridine(13) in tRNA = pseudouridine(13) in tRNA. Functionally, could be responsible for synthesis of pseudouridine from uracil-13 in transfer RNAs. In Pyrobaculum neutrophilum (strain DSM 2338 / JCM 9278 / NBRC 100436 / V24Sta) (Thermoproteus neutrophilus), this protein is Probable tRNA pseudouridine synthase D.